Consider the following 656-residue polypeptide: MVNEARGNDSLNPCLEGSASSSSESSKDSSRCSTPGLDPERHERLRDKMRRRMESGDKWFSLEFFPPRTAEGAVNLISRFDRMAAGGPLFIDVTWHPAGDPGSDKETSSMMIASTAVNYCGLETILHMTCCCQRLEEITGHLHKAKQLGLKNIMALRGDPIGDQWEEEEGGFNYAVDLVKHIRSEFGDYFDLCVAGYPKGHPEAGSFEADLKHLKEKVSAGADFIITQLFFEADTFFRFVKACTDMGITCPIVPGIFPIQGYHSLRQLVKQSKLEVPQEIKDVIEPIKDNDAAIRNYGIELAVSLCHELLASGLVPGLHFYTLNREMATTEVLKRLGMWTEDPRRPLPWALSAHPKRREEDVRPIFWASRPKSYIYRTQEWDEFPNGRWGNSSSPAFGELKDYYLFYLKSKSPRELLLKMWGEELTSEESVFEVFVLYLSGEPNRNGHKVTCLPWNDEPLAAETSLLKEELLRVNRQGILTINSQPNINGKPSSDPVVGWGPSGGYVFQKAYLEFFTSRETAEALLQVLKKYELRVNYHLVNVKGENITNAPELQPNAVTWGIFPGREIIQPTVVDPISFMFWKDEAFALWIEQWGKLYEEESPSRTIIQYIHDNYFLVNLVDNDFPLDNCLWQVVEDALELLNRPTQNEREMEAP.

The segment at 1–46 is disordered; sequence MVNEARGNDSLNPCLEGSASSSSESSKDSSRCSTPGLDPERHERLR. S10, S18, S20, S21, S23, S25, S26, S29, and S30 each carry phosphoserine. T34 is subject to Phosphothreonine. E63 (proton donor/acceptor) is an active-site residue. NAD(+) contacts are provided by residues 63 to 68 and 94 to 95; these read EFFPPR and TW. Residue T94 is modified to Phosphothreonine. 94 to 95 lines the FAD pocket; it reads TW. Residue S103 is modified to Phosphoserine. FAD contacts are provided by residues H127, 157 to 159, 174 to 175, Y197, 201 to 204, D210, and K217; these read RGD, YA, and HPEA. Substrate is bound at residue D159. Residues Q228, Y321, and R325 each coordinate substrate. Residue S394 is modified to Phosphoserine. T451 carries the post-translational modification Phosphothreonine. Residues N456, 461–464, 481–485, T560, and T573 each bind S-adenosyl-L-methionine; these read AAET and TINSQ.

This sequence belongs to the methylenetetrahydrofolate reductase family. In terms of assembly, homodimer. The cofactor is FAD. Phosphorylation of an N-terminal serine-rich phosphorylation region increases sensitivity to S-adenosylmethionine and inhibition.

The enzyme catalyses (6S)-5-methyl-5,6,7,8-tetrahydrofolate + NADP(+) = (6R)-5,10-methylene-5,6,7,8-tetrahydrofolate + NADPH + H(+). It participates in one-carbon metabolism; tetrahydrofolate interconversion. Its activity is regulated as follows. Allosterically regulated by S-adenosylmethionine (SAM). Catalyzes the conversion of 5,10-methylenetetrahydrofolate to 5-methyltetrahydrofolate, a cosubstrate for homocysteine remethylation to methionine. Represents a key regulatory connection between the folate and methionine cycles. In Macaca fascicularis (Crab-eating macaque), this protein is Methylenetetrahydrofolate reductase (NADPH) (MTHFR).